Here is a 364-residue protein sequence, read N- to C-terminus: Histidinol-phosphate aminotransferase (364 aa).

K226 is subject to N6-(pyridoxal phosphate)lysine.

It belongs to the class-II pyridoxal-phosphate-dependent aminotransferase family. Histidinol-phosphate aminotransferase subfamily. Homodimer. Pyridoxal 5'-phosphate serves as cofactor.

It catalyses the reaction L-histidinol phosphate + 2-oxoglutarate = 3-(imidazol-4-yl)-2-oxopropyl phosphate + L-glutamate. It functions in the pathway amino-acid biosynthesis; L-histidine biosynthesis; L-histidine from 5-phospho-alpha-D-ribose 1-diphosphate: step 7/9. The sequence is that of Histidinol-phosphate aminotransferase from Sulfurimonas denitrificans (strain ATCC 33889 / DSM 1251) (Thiomicrospira denitrificans (strain ATCC 33889 / DSM 1251)).